The primary structure comprises 294 residues: 4-hydroxy-tetrahydrodipicolinate synthase (294 aa).

T47 contributes to the pyruvate binding site. Y135 functions as the Proton donor/acceptor in the catalytic mechanism. K163 (schiff-base intermediate with substrate) is an active-site residue. V205 serves as a coordination point for pyruvate.

It belongs to the DapA family. In terms of assembly, homotetramer; dimer of dimers.

Its subcellular location is the cytoplasm. It carries out the reaction L-aspartate 4-semialdehyde + pyruvate = (2S,4S)-4-hydroxy-2,3,4,5-tetrahydrodipicolinate + H2O + H(+). Its pathway is amino-acid biosynthesis; L-lysine biosynthesis via DAP pathway; (S)-tetrahydrodipicolinate from L-aspartate: step 3/4. Functionally, catalyzes the condensation of (S)-aspartate-beta-semialdehyde [(S)-ASA] and pyruvate to 4-hydroxy-tetrahydrodipicolinate (HTPA). This Rickettsia bellii (strain RML369-C) protein is 4-hydroxy-tetrahydrodipicolinate synthase.